Reading from the N-terminus, the 1345-residue chain is Rho guanine nucleotide exchange factor 10 (1345 aa).

Disordered stretches follow at residues 1-84 (MEQG…PAKL) and 99-120 (TPLQ…GVGL). The span at 22-39 (NNEEEGELFDFDSGDEVP) shows a compositional bias: acidic residues. Basic and acidic residues predominate over residues 40-54 (EADRQVPSADDRTRG). Positions 102-111 (QEDQPSSPDA) are enriched in polar residues. Ser157 carries the post-translational modification Phosphoserine. 2 disordered regions span residues 158–195 (VEEE…SALA) and 207–273 (MENP…IPRS). Residues 171 to 191 (QCNSLSSEDLPHSSEQGSQEG) show a composition bias toward polar residues. Positions 224 to 239 (DSEPDEMIYDDVENGE) are enriched in acidic residues. The span at 242–255 (GNSSPEYGWSSSEF) shows a compositional bias: low complexity. A coiled-coil region spans residues 307-335 (GAMEIQQAKQRQERKMQKLMKAAKEGTKD). Position 355 is a phosphoserine (Ser355). A DH domain is found at 397 to 584 (VRRYILGSIV…ETLAEKLNER (188 aa)). Disordered stretches follow at residues 1202 to 1237 (DRAR…QPDT) and 1253 to 1306 (KNDL…RASS). The span at 1256-1271 (LSSSSGSLNLSHGSSS) shows a compositional bias: low complexity. A Phosphoserine modification is found at Ser1262. Gln1314 carries the post-translational modification N5-methylglutamine.

In terms of processing, methylated at Gln-1314 by N6AMT1. As to expression, ubiquitously expressed.

In terms of biological role, may play a role in developmental myelination of peripheral nerves. The chain is Rho guanine nucleotide exchange factor 10 (Arhgef10) from Mus musculus (Mouse).